A 188-amino-acid chain; its full sequence is Inosine triphosphate pyrophosphatase (188 aa).

Residue 11–16 (TGNKHK) participates in ITP binding. Position 39 (Glu-39) interacts with Mg(2+). ITP-binding positions include Lys-51, 67–68 (DT), Lys-84, 143–146 (FGWN), and 171–172 (HR).

This sequence belongs to the HAM1 NTPase family. As to quaternary structure, homodimer. The cofactor is Mg(2+). Mn(2+) serves as cofactor.

The protein resides in the cytoplasm. The protein localises to the nucleus. The enzyme catalyses ITP + H2O = IMP + diphosphate + H(+). It catalyses the reaction dITP + H2O = dIMP + diphosphate + H(+). It carries out the reaction XTP + H2O = XMP + diphosphate + H(+). Its function is as follows. Pyrophosphatase that hydrolyzes non-canonical purine nucleotides such as inosine triphosphate (ITP), deoxyinosine triphosphate (dITP) or xanthosine 5'-triphosphate (XTP) to their respective monophosphate derivatives. The enzyme does not distinguish between the deoxy- and ribose forms. Probably excludes non-canonical purines from RNA and DNA precursor pools, thus preventing their incorporation into RNA and DNA and avoiding chromosomal lesions. This Schizosaccharomyces pombe (strain 972 / ATCC 24843) (Fission yeast) protein is Inosine triphosphate pyrophosphatase.